The primary structure comprises 219 residues: Probable GTP-binding protein EngB (219 aa).

Residues 42–219 form the EngB-type G domain; the sequence is SVPEIAFAGR…RTAVLEAVEL (178 aa). Residues 50-57, 77-81, 97-100, 164-167, and 198-200 contribute to the GTP site; these read GRSNVGKS, GRTQE, DMPG, TKAD, and TSS. 2 residues coordinate Mg(2+): Ser-57 and Thr-79.

This sequence belongs to the TRAFAC class TrmE-Era-EngA-EngB-Septin-like GTPase superfamily. EngB GTPase family. The cofactor is Mg(2+).

Necessary for normal cell division and for the maintenance of normal septation. The polypeptide is Probable GTP-binding protein EngB (Sphingopyxis alaskensis (strain DSM 13593 / LMG 18877 / RB2256) (Sphingomonas alaskensis)).